Reading from the N-terminus, the 298-residue chain is 4-hydroxy-tetrahydrodipicolinate synthase (298 aa).

Thr-48 is a binding site for pyruvate. The active-site Proton donor/acceptor is the Tyr-137. Lys-166 functions as the Schiff-base intermediate with substrate in the catalytic mechanism. Position 207 (Ile-207) interacts with pyruvate.

The protein belongs to the DapA family. As to quaternary structure, homotetramer; dimer of dimers.

It is found in the cytoplasm. The enzyme catalyses L-aspartate 4-semialdehyde + pyruvate = (2S,4S)-4-hydroxy-2,3,4,5-tetrahydrodipicolinate + H2O + H(+). It participates in amino-acid biosynthesis; L-lysine biosynthesis via DAP pathway; (S)-tetrahydrodipicolinate from L-aspartate: step 3/4. Catalyzes the condensation of (S)-aspartate-beta-semialdehyde [(S)-ASA] and pyruvate to 4-hydroxy-tetrahydrodipicolinate (HTPA). The polypeptide is 4-hydroxy-tetrahydrodipicolinate synthase (Campylobacter jejuni subsp. doylei (strain ATCC BAA-1458 / RM4099 / 269.97)).